The chain runs to 141 residues: Large ribosomal subunit protein uL11 (141 aa).

The protein belongs to the universal ribosomal protein uL11 family. Part of the ribosomal stalk of the 50S ribosomal subunit. Interacts with L10 and the large rRNA to form the base of the stalk. L10 forms an elongated spine to which L12 dimers bind in a sequential fashion forming a multimeric L10(L12)X complex. In terms of processing, one or more lysine residues are methylated.

Its function is as follows. Forms part of the ribosomal stalk which helps the ribosome interact with GTP-bound translation factors. The protein is Large ribosomal subunit protein uL11 of Chlamydia muridarum (strain MoPn / Nigg).